The sequence spans 41 residues: Putative toxic protein TimP (41 aa).

Over 1–17 (MKIRCFCIVLIVSGALL) the chain traverses the membrane.

This sequence belongs to the TimP toxin family.

The protein localises to the cell inner membrane. Its function is as follows. Putative toxic component of a potential type I toxin-antitoxin (TA) system. Neutralized by sRNA antitoxin TimR which binds to the 5' UTR of timP mRNA and inhibits translation. The antitoxin gene is encoded immediately upstream and transcribed divergently from the toxin gene; antitoxin RNA is less stable than timP mRNA. The chain is Putative toxic protein TimP from Escherichia coli (strain K12).